We begin with the raw amino-acid sequence, 431 residues long: 2-oxoisovalerate dehydrogenase subunit alpha, mitochondrial (431 aa).

140–142 serves as a coordination point for thiamine diphosphate; that stretch reads QYR. K(+) contacts are provided by Ser189, Thr194, and Gln195.

It belongs to the BCKDHA family. The cofactor is thiamine diphosphate.

It is found in the mitochondrion matrix. The enzyme catalyses N(6)-[(R)-lipoyl]-L-lysyl-[protein] + 3-methyl-2-oxobutanoate + H(+) = N(6)-[(R)-S(8)-2-methylpropanoyldihydrolipoyl]-L-lysyl-[protein] + CO2. It functions in the pathway lipid metabolism; fatty acid biosynthesis. Functionally, the branched-chain alpha-keto dehydrogenase complex catalyzes the overall conversion of alpha-keto acids to acyl-CoA and CO(2). It contains multiple copies of three enzymatic components: branched-chain alpha-keto acid decarboxylase (E1), lipoamide acyltransferase (E2) and lipoamide dehydrogenase (E3). Required for the production of the monomethyl branched-chain fatty acids (mmBCFAs) isopentadecanoate (C15iso) and isoheptadecanoate (C17iso). This is 2-oxoisovalerate dehydrogenase subunit alpha, mitochondrial from Caenorhabditis elegans.